We begin with the raw amino-acid sequence, 87 residues long: Small ribosomal subunit protein uS17 (87 aa).

Belongs to the universal ribosomal protein uS17 family. As to quaternary structure, part of the 30S ribosomal subunit.

In terms of biological role, one of the primary rRNA binding proteins, it binds specifically to the 5'-end of 16S ribosomal RNA. This Listeria innocua serovar 6a (strain ATCC BAA-680 / CLIP 11262) protein is Small ribosomal subunit protein uS17.